The primary structure comprises 346 residues: Ketol-acid reductoisomerase (NADP(+)) (346 aa).

A KARI N-terminal Rossmann domain is found at 1–189 (MQVYYDRDAD…GGGRSGIIET (189 aa)). NADP(+) contacts are provided by residues 24-27 (YGSQ), arginine 48, serine 51, threonine 53, and 83-86 (DEHQ). Residue histidine 108 is part of the active site. Glycine 134 contacts NADP(+). Residues 190 to 335 (TFKEECETDL…EKLRAMMPWI (146 aa)) form the KARI C-terminal knotted domain. Mg(2+) contacts are provided by aspartate 198, glutamate 202, glutamate 234, and glutamate 238. Serine 259 lines the substrate pocket.

Belongs to the ketol-acid reductoisomerase family. The cofactor is Mg(2+).

The enzyme catalyses (2R)-2,3-dihydroxy-3-methylbutanoate + NADP(+) = (2S)-2-acetolactate + NADPH + H(+). It catalyses the reaction (2R,3R)-2,3-dihydroxy-3-methylpentanoate + NADP(+) = (S)-2-ethyl-2-hydroxy-3-oxobutanoate + NADPH + H(+). The protein operates within amino-acid biosynthesis; L-isoleucine biosynthesis; L-isoleucine from 2-oxobutanoate: step 2/4. It functions in the pathway amino-acid biosynthesis; L-valine biosynthesis; L-valine from pyruvate: step 2/4. Involved in the biosynthesis of branched-chain amino acids (BCAA). Catalyzes an alkyl-migration followed by a ketol-acid reduction of (S)-2-acetolactate (S2AL) to yield (R)-2,3-dihydroxy-isovalerate. In the isomerase reaction, S2AL is rearranged via a Mg-dependent methyl migration to produce 3-hydroxy-3-methyl-2-ketobutyrate (HMKB). In the reductase reaction, this 2-ketoacid undergoes a metal-dependent reduction by NADPH to yield (R)-2,3-dihydroxy-isovalerate. In Sphingopyxis alaskensis (strain DSM 13593 / LMG 18877 / RB2256) (Sphingomonas alaskensis), this protein is Ketol-acid reductoisomerase (NADP(+)).